A 315-amino-acid chain; its full sequence is Methionyl-tRNA formyltransferase (315 aa).

112–115 (SLLP) serves as a coordination point for (6S)-5,6,7,8-tetrahydrofolate.

It belongs to the Fmt family.

It catalyses the reaction L-methionyl-tRNA(fMet) + (6R)-10-formyltetrahydrofolate = N-formyl-L-methionyl-tRNA(fMet) + (6S)-5,6,7,8-tetrahydrofolate + H(+). Its function is as follows. Attaches a formyl group to the free amino group of methionyl-tRNA(fMet). The formyl group appears to play a dual role in the initiator identity of N-formylmethionyl-tRNA by promoting its recognition by IF2 and preventing the misappropriation of this tRNA by the elongation apparatus. The chain is Methionyl-tRNA formyltransferase from Leptospira borgpetersenii serovar Hardjo-bovis (strain JB197).